The primary structure comprises 575 residues: LMVVTSNADRICTGITSSNSPHVVKTATQGEVNVTGVIPLTTTPTRSHFANLKGTQTRGKLCPNCFNCTDLDVALGRPKCMGNIPSAKVSVLHEVKPVTSGCFPIMHDRTKIRQLPNLLRGYENIRLSTSNVISAETAPGGPYKIGTSGSCPNVTNGSGFFETMAWAVPKNKTAMNPVTVEVPYICAKGEDQITVWGFHSDSETQMGRLYGDSNPQKFTSYANGVTTHYVSQIGGFPNQTEDEGLKQSGRIVVDYIVQKPEKPGTIVYQRGILLPQKVWCASGRSKVIKGSLPLIGEADCLHEKYGGLNKSKPYYTGEHAKAIGNCPIWVKTPLKLANGTKYRPPAKLLKERGFFGAIAGFLEGGWEGMIDGWHGYTSHGAHGVAVAADLKSTQEAINKITKNLNSLSELEVKNLQRLSGEMDGLHNEILELDEKVDDLRADTISSQIELAVLLSNEGIINSEDEHLLALERKLKKMLGPSAVDIGNGCFETKHKCNQTCLDRIAARTFSAGEFSLPTFDSLNITAASLNDDGLDNHTILLYYSTAASSLAVTLMIAIFIVYMVSRDNVSCSICL.

Over 1–543 (LMVVTSNADR…LDNHTILLYY (543 aa)) the chain is Extracellular. Disulfide bonds link cysteine 12-cysteine 489, cysteine 68-cysteine 80, cysteine 102-cysteine 151, and cysteine 496-cysteine 500. 2 N-linked (GlcNAc...) asparagine; by host glycosylation sites follow: asparagine 33 and asparagine 67. N-linked (GlcNAc...) asparagine; by host glycosylation is found at asparagine 153, asparagine 156, asparagine 171, asparagine 238, asparagine 309, asparagine 338, asparagine 497, asparagine 523, and asparagine 536. Residues 544–564 (STAASSLAVTLMIAIFIVYMV) traverse the membrane as a helical segment. Topologically, residues 565 to 575 (SRDNVSCSICL) are cytoplasmic. S-palmitoyl cysteine; by host attachment occurs at residues cysteine 571 and cysteine 574.

This sequence belongs to the influenza viruses hemagglutinin family. Homotrimer of disulfide-linked HA1-HA2. In terms of processing, palmitoylated. Post-translationally, in natural infection, inactive HA is matured into HA1 and HA2 outside the cell by one or more trypsin-like, arginine-specific endoprotease secreted by the bronchial epithelial cells. One identified protease that may be involved in this process is secreted in lungs by club cells.

The protein resides in the virion membrane. Its subcellular location is the host apical cell membrane. Binds to sialic acid-containing receptors on the cell surface, bringing about the attachment of the virus particle to the cell. Plays a major role in the determination of host range restriction and virulence. Class I viral fusion protein. Responsible for penetration of the virus into the cell cytoplasm by mediating the fusion of the membrane of the endocytosed virus particle with the endosomal membrane. Low pH in endosomes induce an irreversible conformational change in HA2, releasing the fusion hydrophobic peptide. Several trimers are required to form a competent fusion pore. The sequence is that of Hemagglutinin from Homo sapiens (Human).